The chain runs to 195 residues: Probable GTP-binding protein EngB (195 aa).

One can recognise an EngB-type G domain in the interval 24 to 195 (DWPEIALAGR…EAWEAILRYL (172 aa)). GTP contacts are provided by residues 32 to 39 (GRSNVGKS), 59 to 63 (GKTQL), 77 to 80 (DVPG), 144 to 147 (TKAD), and 176 to 178 (FSS). The Mg(2+) site is built by serine 39 and threonine 61.

Belongs to the TRAFAC class TrmE-Era-EngA-EngB-Septin-like GTPase superfamily. EngB GTPase family. It depends on Mg(2+) as a cofactor.

Its function is as follows. Necessary for normal cell division and for the maintenance of normal septation. The sequence is that of Probable GTP-binding protein EngB from Lactococcus lactis subsp. lactis (strain IL1403) (Streptococcus lactis).